We begin with the raw amino-acid sequence, 181 residues long: Inner membrane-spanning protein YciB (181 aa).

5 helical membrane passes run 22-42 (IYTA…VTYA), 50-70 (MQLI…FLHD), 80-100 (IVYC…KPVI), 122-142 (WVLF…EMPL), and 148-168 (FKVF…GMYV).

It belongs to the YciB family.

It is found in the cell inner membrane. In terms of biological role, plays a role in cell envelope biogenesis, maintenance of cell envelope integrity and membrane homeostasis. The chain is Inner membrane-spanning protein YciB from Aliivibrio fischeri (strain MJ11) (Vibrio fischeri).